Here is a 299-residue protein sequence, read N- to C-terminus: Oxygen-dependent coproporphyrinogen-III oxidase (299 aa).

Ser-92 contacts substrate. 2 residues coordinate a divalent metal cation: His-96 and His-106. The active-site Proton donor is His-106. Position 108–110 (108–110) interacts with substrate; sequence NVR. Positions 145 and 175 each coordinate a divalent metal cation. The interval 239–274 is important for dimerization; it reads YVEFNLVYDRGTLFGLQSGGRAESILMSLPPQVRWE. Position 257 to 259 (257 to 259) interacts with substrate; that stretch reads GGR.

It belongs to the aerobic coproporphyrinogen-III oxidase family. Homodimer. A divalent metal cation serves as cofactor.

It localises to the cytoplasm. It carries out the reaction coproporphyrinogen III + O2 + 2 H(+) = protoporphyrinogen IX + 2 CO2 + 2 H2O. The protein operates within porphyrin-containing compound metabolism; protoporphyrin-IX biosynthesis; protoporphyrinogen-IX from coproporphyrinogen-III (O2 route): step 1/1. Its function is as follows. Involved in the heme biosynthesis. Catalyzes the aerobic oxidative decarboxylation of propionate groups of rings A and B of coproporphyrinogen-III to yield the vinyl groups in protoporphyrinogen-IX. This Xanthomonas campestris pv. campestris (strain B100) protein is Oxygen-dependent coproporphyrinogen-III oxidase.